We begin with the raw amino-acid sequence, 114 residues long: Iron-sulfur cluster insertion protein ErpA (114 aa).

Residues cysteine 42, cysteine 106, and cysteine 108 each coordinate iron-sulfur cluster.

It belongs to the HesB/IscA family. Homodimer. Iron-sulfur cluster is required as a cofactor.

Required for insertion of 4Fe-4S clusters for at least IspG. The sequence is that of Iron-sulfur cluster insertion protein ErpA from Cronobacter sakazakii (strain ATCC BAA-894) (Enterobacter sakazakii).